The following is a 108-amino-acid chain: UPF0145 protein Tmel_1129 (108 aa).

This sequence belongs to the UPF0145 family.

The chain is UPF0145 protein Tmel_1129 from Thermosipho melanesiensis (strain DSM 12029 / CIP 104789 / BI429).